The following is a 237-amino-acid chain: Small ribosomal subunit protein eS4 (237 aa).

One can recognise an S4 RNA-binding domain in the interval 38-110 (LPLAVVVRDV…EAKYYDLKPI (73 aa)).

The protein belongs to the eukaryotic ribosomal protein eS4 family.

In Pyrobaculum calidifontis (strain DSM 21063 / JCM 11548 / VA1), this protein is Small ribosomal subunit protein eS4.